We begin with the raw amino-acid sequence, 401 residues long: Divinyl chlorophyllide a 8-vinyl-reductase, chloroplastic (401 aa).

Over residues 1 to 10 the composition is skewed to polar residues; that stretch reads MATILLSSRL. The tract at residues 1-26 is disordered; it reads MATILLSSRLPTTGTATPSPTRPAPR. The transit peptide at 1–54 directs the protein to the chloroplast; the sequence is MATILLSSRLPTTGTATPSPTRPAPRFLSFPGTAIRRRGRGPLLASSAVSPPAP.

It is found in the plastid. The protein resides in the chloroplast. It carries out the reaction protochlorophyllide a + NADP(+) = 3,8-divinyl protochlorophyllide a + NADPH + H(+). It functions in the pathway porphyrin-containing compound metabolism; chlorophyll biosynthesis. Functionally, catalyzes the conversion of divinyl chlorophyllide to monovinyl chlorophyllide. Reduces the 8-vinyl group of the tetrapyrrole to an ethyl group using NADPH as the reductant. Can use (3,8-divinyl)-chlorophyllide a (DV-Chlidea) &gt; (3,8-divinyl)-chlorophyll a (DV-Chla) &gt; (3,8-divinyl)-protochlorophyllide a (DV-Pchlidea) &gt; (3,8-divinyl)-magnesium-protoporphyrin IX monomethyl ester (DV-MPE) &gt; (3,8-divinyl)-magnesium-protoporphyrin IX (DV-Mg-Proto) as substrates. The sequence is that of Divinyl chlorophyllide a 8-vinyl-reductase, chloroplastic (DVR) from Zea mays (Maize).